Reading from the N-terminus, the 209-residue chain is Chromophore lyase CpcT/CpeT 1 (209 aa).

Belongs to the CpcT/CpeT biliprotein lyase family.

Its function is as follows. Covalently attaches a chromophore to Cys residue(s) of phycobiliproteins. This Trichodesmium erythraeum (strain IMS101) protein is Chromophore lyase CpcT/CpeT 1.